The chain runs to 321 residues: Lipoyl synthase (321 aa).

Positions 68, 73, 79, 94, 98, 101, and 308 each coordinate [4Fe-4S] cluster. The 218-residue stretch at 80–297 folds into the Radical SAM core domain; it reads FNHGTATFMI…KAEAMAMGFT (218 aa).

The protein belongs to the radical SAM superfamily. Lipoyl synthase family. It depends on [4Fe-4S] cluster as a cofactor.

The protein localises to the cytoplasm. The enzyme catalyses [[Fe-S] cluster scaffold protein carrying a second [4Fe-4S](2+) cluster] + N(6)-octanoyl-L-lysyl-[protein] + 2 oxidized [2Fe-2S]-[ferredoxin] + 2 S-adenosyl-L-methionine + 4 H(+) = [[Fe-S] cluster scaffold protein] + N(6)-[(R)-dihydrolipoyl]-L-lysyl-[protein] + 4 Fe(3+) + 2 hydrogen sulfide + 2 5'-deoxyadenosine + 2 L-methionine + 2 reduced [2Fe-2S]-[ferredoxin]. Its pathway is protein modification; protein lipoylation via endogenous pathway; protein N(6)-(lipoyl)lysine from octanoyl-[acyl-carrier-protein]: step 2/2. Functionally, catalyzes the radical-mediated insertion of two sulfur atoms into the C-6 and C-8 positions of the octanoyl moiety bound to the lipoyl domains of lipoate-dependent enzymes, thereby converting the octanoylated domains into lipoylated derivatives. This is Lipoyl synthase from Klebsiella pneumoniae (strain 342).